A 575-amino-acid chain; its full sequence is Chaperonin CPN60-2, mitochondrial (575 aa).

The transit peptide at Met-1–Tyr-32 directs the protein to the mitochondrion.

The protein belongs to the chaperonin (HSP60) family.

Its subcellular location is the mitochondrion. Implicated in mitochondrial protein import and macromolecular assembly. May facilitate the correct folding of imported proteins. May also prevent misfolding and promote the refolding and proper assembly of unfolded polypeptides generated under stress conditions in the mitochondrial matrix. The sequence is that of Chaperonin CPN60-2, mitochondrial (CPN60-2) from Cucurbita maxima (Pumpkin).